The following is a 690-amino-acid chain: Tripartite terminase subunit 3 (690 aa).

The Walker A motif motif lies at 226-233 (IPRRHGKT). The Walker B motif signature appears at 321-326 (LLFVDE). The active-site For ATPase activity is E326. Residues D481, E555, and D667 each act as for nuclease activity in the active site.

It belongs to the herpesviridae TRM3 protein family. Interacts with the terminase subunits TRM1 and TRM2. Interacts with portal protein.

It is found in the host nucleus. In terms of biological role, component of the molecular motor that translocates viral genomic DNA in empty capsid during DNA packaging. Forms a tripartite terminase complex together with TRM1 and TRM2 in the host cytoplasm. Once the complex reaches the host nucleus, it interacts with the capsid portal vertex. This portal forms a ring in which genomic DNA is translocated into the capsid. TRM3 carries an RNase H-like nuclease activity that plays an important role for the cleavage of concatemeric viral DNA into unit length genomes. This is Tripartite terminase subunit 3 from Homo sapiens (Human).